The primary structure comprises 406 residues: Cysteine desulfurase (406 aa).

An N6-(pyridoxal phosphate)lysine modification is found at lysine 226. The active-site Cysteine persulfide intermediate is the cysteine 364.

The protein belongs to the class-V pyridoxal-phosphate-dependent aminotransferase family. Csd subfamily. In terms of assembly, homodimer. Interacts with SufE and the SufBCD complex composed of SufB, SufC and SufD. The interaction with SufE is required to mediate the direct transfer of the sulfur atom from the S-sulfanylcysteine. It depends on pyridoxal 5'-phosphate as a cofactor.

The protein resides in the cytoplasm. It catalyses the reaction (sulfur carrier)-H + L-cysteine = (sulfur carrier)-SH + L-alanine. The catalysed reaction is L-selenocysteine + AH2 = hydrogenselenide + L-alanine + A + H(+). The protein operates within cofactor biosynthesis; iron-sulfur cluster biosynthesis. Functionally, cysteine desulfurases mobilize the sulfur from L-cysteine to yield L-alanine, an essential step in sulfur metabolism for biosynthesis of a variety of sulfur-containing biomolecules. Component of the suf operon, which is activated and required under specific conditions such as oxidative stress and iron limitation. Acts as a potent selenocysteine lyase in vitro, that mobilizes selenium from L-selenocysteine. Selenocysteine lyase activity is however unsure in vivo. In Salmonella gallinarum (strain 287/91 / NCTC 13346), this protein is Cysteine desulfurase.